We begin with the raw amino-acid sequence, 472 residues long: uncharacterized protein (472 aa).

It to B.subtilis YcdC.

This is an uncharacterized protein from Bacillus subtilis (strain 168).